The primary structure comprises 382 residues: Galactokinase (382 aa).

A substrate-binding site is contributed by 34-37 (EHTD). 124–130 (GAGLSSS) is an ATP binding site. Positions 130 and 162 each coordinate Mg(2+). Catalysis depends on D174, which acts as the Proton acceptor. Residue Y223 participates in substrate binding.

Belongs to the GHMP kinase family. GalK subfamily.

Its subcellular location is the cytoplasm. The enzyme catalyses alpha-D-galactose + ATP = alpha-D-galactose 1-phosphate + ADP + H(+). The protein operates within carbohydrate metabolism; galactose metabolism. Functionally, catalyzes the transfer of the gamma-phosphate of ATP to D-galactose to form alpha-D-galactose-1-phosphate (Gal-1-P). This is Galactokinase from Escherichia coli O157:H7 (strain EC4115 / EHEC).